The sequence spans 556 residues: Endoglucanase 22 (556 aa).

Residues Met1–Ala33 form the signal peptide. The active-site Nucleophile is Asp108. Active-site residues include His450, Asp502, and Glu511.

This sequence belongs to the glycosyl hydrolase 9 (cellulase E) family.

It is found in the secreted. It catalyses the reaction Endohydrolysis of (1-&gt;4)-beta-D-glucosidic linkages in cellulose, lichenin and cereal beta-D-glucans.. In Oryza sativa subsp. japonica (Rice), this protein is Endoglucanase 22 (GLU11).